We begin with the raw amino-acid sequence, 449 residues long: uncharacterized protein (449 aa).

The segment covering Met-1 to Asp-11 has biased composition (acidic residues). The disordered stretch occupies residues Met-1–Pro-33. The chain crosses the membrane as a helical span at residues Leu-45–Val-65. Residues Gln-349–Gly-449 form a disordered region. Over residues Pro-365–Pro-387 the composition is skewed to pro residues. Over residues His-409 to Glu-418 the composition is skewed to low complexity. Over residues Ala-437–Gly-449 the composition is skewed to pro residues.

Its subcellular location is the cell membrane. It localises to the secreted. In terms of biological role, may play a role in septum formation. This is an uncharacterized protein from Mycobacterium tuberculosis (strain CDC 1551 / Oshkosh).